We begin with the raw amino-acid sequence, 328 residues long: Beta-agarase C (328 aa).

The first 17 residues, 1-17 (MNLTKMAVFAASLFCLA), serve as a signal peptide directing secretion. Residues 18–67 (CKNDIDTELEKKSIPESEIQKSEEKLPNEEELTPTDPDEETNKEETVTAN) constitute a propeptide that is removed on maturation. Residues 26–45 (LEKKSIPESEIQKSEEKLPN) show a composition bias toward basic and acidic residues. The interval 26 to 61 (LEKKSIPESEIQKSEEKLPNEEELTPTDPDEETNKE) is disordered. The span at 46 to 59 (EEELTPTDPDEETN) shows a compositional bias: acidic residues. The GH16 domain occupies 70–328 (YDFTGNTPPP…WIHTYQLVEE (259 aa)). Substrate is bound by residues tryptophan 110, 119–129 (KAENSGVSDGK), 133–135 (KAT), glutamate 188, glutamate 193, and arginine 224. The active-site Nucleophile is the glutamate 188. Glutamate 193 (proton donor) is an active-site residue.

It belongs to the glycosyl hydrolase 16 family.

Its subcellular location is the secreted. The catalysed reaction is Hydrolysis of (1-&gt;4)-beta-D-galactosidic linkages in agarose, giving the tetramer as the predominant product.. Its function is as follows. Cleaves the beta-1,4-linkages between beta-D-galactose and alpha-L-3,6-anhydro-galactose residues in agarose. Cleaves agarose in a random manner with retention of the anomeric-bond configuration, producing beta-anomers that give rise progressively to alpha-anomers when mutarotation takes place. The chain is Beta-agarase C (agaC) from Zobellia galactanivorans (strain DSM 12802 / CCUG 47099 / CIP 106680 / NCIMB 13871 / Dsij).